The primary structure comprises 175 residues: MLPHLVLNSISWMLLSCLLFVFQVQGEDFQKEVPSPRTSCPMGYKAYRSHCYALVMTPKSWFQADLVCQKRPSGHLVSILSGGEASFVSSLVNGRVDNYQDIWIGLHDPTMGQQPNGGGWEWSNSDVLNYLNWDGDPSSTVNRGHCGSLTASSGFLKWGDYYCDGTLPFVCKFKQ.

Residues 1–26 (MLPHLVLNSISWMLLSCLLFVFQVQG) form the signal peptide. Residues 27-37 (EDFQKEVPSPR) constitute a propeptide that is removed on maturation. Disulfide bonds link cysteine 40/cysteine 51, cysteine 68/cysteine 171, and cysteine 146/cysteine 163. The C-type lectin domain occupies 47-172 (YRSHCYALVM…CDGTLPFVCK (126 aa)). The Zn(2+) site is built by histidine 50, histidine 107, glutamate 121, and histidine 145. Residues 103–118 (WIGLHDPTMGQQPNGG) are sufficient to activate EXTL3.

In terms of assembly, forms a hexameric membrane-permeabilizing oligomeric pore on membrane phospholipids. The hexamer is formed by three dimers related by helical symmetry. Forms filaments, filamentation traps pore complexes and limits damage to host cells. Interacts with EXTL3. Proteolytic processing by trypsin removes an inhibitory N-terminal propeptide and is essential for peptidoglycan binding and antibacterial activity. As to expression, small intestine and pancreas.

The protein localises to the secreted. Bactericidal C-type lectin. The lack of the EPN motif may explain its inability to bind peptidoglycan. In terms of biological role, acts as a hormone in response to different stimuli like anti-inflammatory signals, such as IL17A, or gut microbiome. Secreted by different cell types to activate its receptor EXTL3 and induce cell specific signaling pathways. Induced by IL17A in keratinocytes, regulates keratinocyte proliferation and differentiation after skin injury via activation of EXTL3-PI3K-AKT signaling pathway. In parallel, inhibits skin inflammation through the inhibition of inflammatory cytokines such as IL6 and TNF. In pancreas, is able to permealize beta-cells membrane and stimulate their proliferation. This chain is Regenerating islet-derived protein 3-alpha (Reg3a), found in Mus musculus (Mouse).